The sequence spans 497 residues: 5'-AMP-activated protein kinase subunit gamma-3 (497 aa).

Residues 16 to 143 (STQTPSWSSF…SSSSTDDLDQ (128 aa)) are disordered. The segment covering 39–54 (GDSTSWPSPAMTTSAE) has biased composition (polar residues). Over residues 68 to 79 (KSQEDVEERELP) the composition is skewed to basic and acidic residues. CBS domains follow at residues 204–265 (MATS…RSPL), 287–345 (CFKP…QRTL), and 363–423 (TFRD…HLDI). ADP is bound by residues Arg-232, 247 to 252 (MLTITD), Val-292, 313 to 314 (HR), and Lys-332. Residues Arg-232, 247–252 (MLTITD), Val-292, His-313, 313–314 (HR), Lys-332, Thr-363, Ala-368, 389–390 (SA), 405–408 (SRFD), Arg-432, Leu-440, His-461, 461–462 (HR), and 477–480 (SLSD) each bind AMP. ATP-binding positions include Arg-232, 247 to 252 (MLTITD), Val-292, 313 to 314 (HR), Arg-314, and Lys-332. Positions 300-321 (LFEAVYTLIKNRIHRLPVLDPV) match the AMPK pseudosubstrate motif. ADP is bound by residues 405 to 408 (SRFD), Arg-432, Leu-440, and 461 to 462 (HR). ATP is bound by residues 405-408 (SRFD), Arg-432, Leu-440, and 461-462 (HR). The 60-residue stretch at 435 to 494 (CLEGVLSCQPHETLGEVIDRIAREQVHRLVLVDETQHLLGVVSLSDILQALVLSPAGIDA) folds into the CBS 4 domain.

Belongs to the 5'-AMP-activated protein kinase gamma subunit family. As to quaternary structure, AMPK is a heterotrimer of an alpha catalytic subunit (PRKAA1 or PRKAA2), a beta (PRKAB1 or PRKAB2) and a gamma non-catalytic subunits (PRKAG1, PRKAG2 or PRKAG3). Interacts with FNIP1 and FNIP2. Phosphorylated by ULK1; leading to negatively regulate AMPK activity and suggesting the existence of a regulatory feedback loop between ULK1 and AMPK. Post-translationally, glycosylated; O-GlcNAcylated by OGT, promoting the AMP-activated protein kinase (AMPK) activity.

AMP/ATP-binding subunit of AMP-activated protein kinase (AMPK), an energy sensor protein kinase that plays a key role in regulating cellular energy metabolism. In response to reduction of intracellular ATP levels, AMPK activates energy-producing pathways and inhibits energy-consuming processes: inhibits protein, carbohydrate and lipid biosynthesis, as well as cell growth and proliferation. AMPK acts via direct phosphorylation of metabolic enzymes, and by longer-term effects via phosphorylation of transcription regulators. AMPK also acts as a regulator of cellular polarity by remodeling the actin cytoskeleton; probably by indirectly activating myosin. The AMPK gamma3 subunit is a non-catalytic subunit with a regulatory role in muscle energy metabolism. It mediates binding to AMP, ADP and ATP, leading to AMPK activation or inhibition: AMP-binding results in allosteric activation of alpha catalytic subunit (PRKAA1 or PRKAA2) both by inducing phosphorylation and preventing dephosphorylation of catalytic subunits. ADP also stimulates phosphorylation, without stimulating already phosphorylated catalytic subunit. ATP promotes dephosphorylation of catalytic subunit, rendering the AMPK enzyme inactive. The polypeptide is 5'-AMP-activated protein kinase subunit gamma-3 (PRKAG3) (Bos taurus (Bovine)).